A 389-amino-acid polypeptide reads, in one-letter code: Phospho-N-acetylmuramoyl-pentapeptide-transferase (389 aa).

The next 10 helical transmembrane spans lie at 25–45, 74–94, 97–117, 134–154, 190–210, 222–242, 259–279, 286–306, 311–331, and 366–386; these read RAVM…PWVI, MGGV…CDWG, FIWV…VDDY, FFWQ…SVSE, ISYP…IVGS, GLVI…AYVM, AGEL…FLWF, VFMG…VAVI, IVLF…MAQV, and QVTV…LSTL.

This sequence belongs to the glycosyltransferase 4 family. MraY subfamily. Mg(2+) is required as a cofactor.

Its subcellular location is the cell inner membrane. The enzyme catalyses UDP-N-acetyl-alpha-D-muramoyl-L-alanyl-gamma-D-glutamyl-meso-2,6-diaminopimeloyl-D-alanyl-D-alanine + di-trans,octa-cis-undecaprenyl phosphate = di-trans,octa-cis-undecaprenyl diphospho-N-acetyl-alpha-D-muramoyl-L-alanyl-D-glutamyl-meso-2,6-diaminopimeloyl-D-alanyl-D-alanine + UMP. The protein operates within cell wall biogenesis; peptidoglycan biosynthesis. Catalyzes the initial step of the lipid cycle reactions in the biosynthesis of the cell wall peptidoglycan: transfers peptidoglycan precursor phospho-MurNAc-pentapeptide from UDP-MurNAc-pentapeptide onto the lipid carrier undecaprenyl phosphate, yielding undecaprenyl-pyrophosphoryl-MurNAc-pentapeptide, known as lipid I. This is Phospho-N-acetylmuramoyl-pentapeptide-transferase from Cupriavidus necator (strain ATCC 17699 / DSM 428 / KCTC 22496 / NCIMB 10442 / H16 / Stanier 337) (Ralstonia eutropha).